Here is a 579-residue protein sequence, read N- to C-terminus: Protein disulfide isomerase-like 1-3 (579 aa).

The signal sequence occupies residues 1-25 (MASSSTSISLLLFVSFILLLVNSRA). Asn27 carries N-linked (GlcNAc...) asparagine glycosylation. Basic and acidic residues-rich tracts occupy residues 44–69 (EESKEQSHGGGSYHEEEHDHQHRDFE) and 80–89 (EFHHGDHGYE). A disordered region spans residues 44-91 (EESKEQSHGGGSYHEEEHDHQHRDFENYDDLEQGGGEFHHGDHGYEEE). The Thioredoxin 1 domain occupies 81-204 (FHHGDHGYEE…IVTWLKKKAS (124 aa)). N-linked (GlcNAc...) asparagine glycosylation is found at Asn108 and Asn115. Catalysis depends on nucleophile residues Cys128 and Cys131. A disulfide bond links Cys128 and Cys131. Asn209, Asn293, Asn313, and Asn338 each carry an N-linked (GlcNAc...) asparagine glycan. Positions 416–546 (DFLADKLKPF…LYKFLKKHAS (131 aa)) constitute a Thioredoxin 2 domain. Catalysis depends on nucleophile residues Cys467 and Cys470. An intrachain disulfide couples Cys467 to Cys470. An N-linked (GlcNAc...) asparagine glycan is attached at Asn520. The interval 558–579 (EPVISTMKSDEKIEGDSSKDEL) is disordered. Residues 565-579 (KSDEKIEGDSSKDEL) are compositionally biased toward basic and acidic residues. The Prevents secretion from ER signature appears at 576 to 579 (KDEL).

Belongs to the protein disulfide isomerase family. As to expression, widely expressed.

Its subcellular location is the endoplasmic reticulum lumen. The catalysed reaction is Catalyzes the rearrangement of -S-S- bonds in proteins.. In terms of biological role, acts as a protein-folding catalyst that interacts with nascent polypeptides to catalyze the formation, isomerization, and reduction or oxidation of disulfide bonds. This is Protein disulfide isomerase-like 1-3 (PDIL1-3) from Arabidopsis thaliana (Mouse-ear cress).